Here is a 49-residue protein sequence, read N- to C-terminus: U3-plectoxin-Pt1a (49 aa).

Intrachain disulfides connect Cys-2–Cys-16, Cys-9–Cys-30, Cys-15–Cys-41, Cys-32–Cys-39, and Cys-45–Cys-49.

Expressed by the venom gland.

It localises to the secreted. Potent toxin that may paralyze and/or kill insect pests such as H.virescens (lepidoptera), S.exigua (beet armyworm) and M.sexta (tobacco hornworm). This is U3-plectoxin-Pt1a from Plectreurys tristis (Spider).